The following is a 186-amino-acid chain: Adenine phosphoribosyltransferase (186 aa).

It belongs to the purine/pyrimidine phosphoribosyltransferase family. As to quaternary structure, homodimer.

It localises to the cytoplasm. The enzyme catalyses AMP + diphosphate = 5-phospho-alpha-D-ribose 1-diphosphate + adenine. The protein operates within purine metabolism; AMP biosynthesis via salvage pathway; AMP from adenine: step 1/1. In terms of biological role, catalyzes a salvage reaction resulting in the formation of AMP, that is energically less costly than de novo synthesis. This Xanthomonas euvesicatoria pv. vesicatoria (strain 85-10) (Xanthomonas campestris pv. vesicatoria) protein is Adenine phosphoribosyltransferase.